The following is a 128-amino-acid chain: Ribosome-binding factor A (128 aa).

Belongs to the RbfA family. Monomer. Binds 30S ribosomal subunits, but not 50S ribosomal subunits or 70S ribosomes.

Its subcellular location is the cytoplasm. In terms of biological role, one of several proteins that assist in the late maturation steps of the functional core of the 30S ribosomal subunit. Associates with free 30S ribosomal subunits (but not with 30S subunits that are part of 70S ribosomes or polysomes). Required for efficient processing of 16S rRNA. May interact with the 5'-terminal helix region of 16S rRNA. The chain is Ribosome-binding factor A from Haemophilus influenzae (strain 86-028NP).